A 1407-amino-acid chain; its full sequence is MKDLLKFLKAQTKTEEFDAIKIALASPDMIRSWSFGEVKKPETINYRTFKPERDGLFCARIFGPVKDYECLCGKYKRLKHRGVICEKCGVEVTQTKVRRERMGHIELASPTAHIWFLKSLPSRIGLLLDMPLRDIERVLYFESYVVIEGGMTNLERQQILTEEQYLDALEEFGDEFDAKMGAEAIQALLKSMDLEQECEQLREELNETNSETKRKKLTKRIKLLEAFVQSGNKPEWMILTVLPVLPPDLRPLVPLDGGRFATSDLNDLYRRVINRNNRLKRLLDLAAPDIIVRNEKRMLQEAVDALLDNGRRGRAITGSNKRPLKSLADMIKGKQGRFRQNLLGKRVDYSGRSVITVGPYLRLHQCGLPKKMALELFKPFIYGKLELRGLATTIKAAKKMVEREEAVVWDILDEVIREHPVLLNRAPTLHRLGIQAFEPVLIEGKAIQLHPLVCAAYNADFDGDQMAVHVPLTLEAQLEARALMMSTNNILSPANGEPIIVPSQDVVLGLYYMTRDCVNAKGEGMVLTGPKEAERLYRTGLASLHARVKVRITEYEKDANGELVAKTSLKDTTVGRAILWMIVPKGLPYSIVNQALGKKAISKMLNTCYRILGLKPTVIFADQIMYTGFAYAARSGASVGIDDMVIPEKKHEIISEAEAEVAEIQEQFQSGLVTAGERYNKVIDIWAAANDRVSKAMMDNLQTETVINRDGQEEKQVSFNSIYMMADSGARGSAAQIRQLAGMRGLMAKPDGSIIETPITANFREGLNVLQYFISTHGARKGLADTALKTANSGYLTRRLVDVAQDLVVTEDDCGTHEGIMMTPVIEGGDVKEPLRDRVLGRVTAEDVLKPGTADILVPRNTLLHEQWCDLLEENSVDAVKVRSVVSCDTDFGVCAHCYGRDLARGHIINKGEAIGVIAAQSIGEPGTQLTMRTFHIGGAASRAAAESSIQVKNKGSIKLSNVKSVVNSSGKLVITSRNTELKLIDEFGRTKESYKVPYGAVLAKGDGEQVAGGETVANWDPHTMPVITEVSGFVRFTDMIDGQTITRQTDELTGLSSLVVLDSAERTAGGKDLRPALKIVDAQGNDVLIPGTDMPAQYFLPGKAIVQLEDGVQISSGDTLARIPQESGGTKDITGGLPRVADLFEARRPKEPAILAEISGIVSFGKETKGKRRLVITPVDGSDPYEEMIPKWRQLNVFEGERVERGDVISDGPEAPHDILRLRGVHAVTRYIVNEVQDVYRLQGVKINDKHIEVIVRQMLRKATIVNAGSSDFLEGEQVEYSRVKIANRELEANGKVGATYSRDLLGITKASLATESFISAASFQETTRVLTEAAVAGKRDELRGLKENVIVGRLIPAGTGYAYHQDRMRRRAAGEAPAAPQVTAEDASASLAELLNAGLGGSDNE.

Zn(2+) contacts are provided by Cys-70, Cys-72, Cys-85, and Cys-88. The Mg(2+) site is built by Asp-460, Asp-462, and Asp-464. 4 residues coordinate Zn(2+): Cys-814, Cys-888, Cys-895, and Cys-898. Lys-972 is subject to N6-acetyllysine.

The protein belongs to the RNA polymerase beta' chain family. As to quaternary structure, the RNAP catalytic core consists of 2 alpha, 1 beta, 1 beta' and 1 omega subunit. When a sigma factor is associated with the core the holoenzyme is formed, which can initiate transcription. It depends on Mg(2+) as a cofactor. Requires Zn(2+) as cofactor.

It carries out the reaction RNA(n) + a ribonucleoside 5'-triphosphate = RNA(n+1) + diphosphate. In terms of biological role, DNA-dependent RNA polymerase catalyzes the transcription of DNA into RNA using the four ribonucleoside triphosphates as substrates. This is DNA-directed RNA polymerase subunit beta' from Shigella flexneri serotype 5b (strain 8401).